We begin with the raw amino-acid sequence, 125 residues long: Kappa-casein (125 aa).

The interval 42–63 (LPNIDPPTVERRPRPRPSFIAI) is disordered. The O-linked (GalNAc...) threonine glycan is linked to threonine 97. Serine 104 is modified (phosphoserine; alternate). O-linked (GalNAc...) serine; alternate glycosylation is present at serine 104. Threonine 121 carries an O-linked (GalNAc...) threonine glycan. At serine 122 the chain carries Phosphoserine.

The protein belongs to the kappa-casein family. Mammary gland specific. Secreted in milk.

The protein localises to the secreted. In terms of biological role, kappa-casein stabilizes micelle formation, preventing casein precipitation in milk. The chain is Kappa-casein (CSN3) from Lama guanicoe (Guanaco).